Here is a 1049-residue protein sequence, read N- to C-terminus: Protein phosphatase Slingshot homolog 1 (1049 aa).

Polar residues predominate over residues 1 to 12 (MALVTLQRSPTP). Residues 1-28 (MALVTLQRSPTPSAASSSASNSELEAGS) form a disordered region. The residue at position 2 (alanine 2) is an N-acetylalanine. The segment covering 13 to 25 (SAASSSASNSELE) has biased composition (low complexity). A phosphoserine mark is found at serine 37 and serine 57. A DEK-C domain is found at 249–304 (ERTERLIKAKLRSIMMSQDLENVTSKEIRNELEKQMNCNLKELKEFIDNEMLLILG). The Tyrosine-protein phosphatase domain maps to 308–449 (KPSLIFDHLY…LSEYEGILDA (142 aa)). Cysteine 393 serves as the catalytic Phosphocysteine intermediate. The interval 456–499 (KLWRQQTDSSLQQPVDDPAGPGDFLPETPDGTPESQLPFLDDAA) is disordered. Positions 458–468 (WRQQTDSSLQQ) are enriched in polar residues. Phosphoserine is present on serine 515. Disordered stretches follow at residues 544-603 (AAPP…RWGQ), 693-787 (HLAS…KPAK), 825-899 (HTKE…KSPP), and 923-955 (PTSSSMSSNLTRSSSSDSIHSVRGKPGLVKQRT). A compositionally biased stretch (basic and acidic residues) spans 564–573 (CEKDVKKKLE). Serine 576 is subject to Phosphoserine. The segment covering 731–742 (GAALEPPASLLE) has biased composition (low complexity). Residues 772–787 (VIKEESSPKKDMKPAK) show a composition bias toward basic and acidic residues. The residue at position 897 (serine 897) is a Phosphoserine. The segment at 897–1049 (SPPPFFYRLD…LKSPSWMSKS (153 aa)) is interaction with YWHAG. The span at 925–943 (SSSMSSNLTRSSSSDSIHS) shows a compositional bias: low complexity. Phosphoserine is present on serine 978. A disordered region spans residues 989 to 1049 (TEDLSSEADP…LKSPSWMSKS (61 aa)). A compositionally biased stretch (polar residues) spans 1001-1013 (VADSQDTTLSESS).

This sequence belongs to the protein-tyrosine phosphatase family. As to quaternary structure, interacts with actin and this stimulates phosphatase activity. Also interacts with LIMK1 and with the 14-3-3 proteins YWHAB, YWHAG, YWHAQ, and YWHAZ. Interaction with 14-3-3 proteins inhibits phosphatase activity and also blocks recruitment to lamellipodia and stimulation by actin. Phosphorylated. Inhibitory phosphorylation by PAK4 promotes binding to YWHAZ. Phosphorylation at Ser-978 is decreased by stimuli which promote actin reorganization and lamellipodia formation. Can be dephosphorylated and activated by PPP3CA/calcineurin A. Phosphorylation decreases immediately prior to telophase.

The protein resides in the cytoplasm. The protein localises to the cytoskeleton. Its subcellular location is the cell projection. It is found in the lamellipodium. It localises to the cleavage furrow. The protein resides in the midbody. The catalysed reaction is O-phospho-L-tyrosyl-[protein] + H2O = L-tyrosyl-[protein] + phosphate. It carries out the reaction O-phospho-L-seryl-[protein] + H2O = L-seryl-[protein] + phosphate. The enzyme catalyses O-phospho-L-threonyl-[protein] + H2O = L-threonyl-[protein] + phosphate. Functionally, protein phosphatase which regulates actin filament dynamics. Dephosphorylates and activates the actin binding/depolymerizing factor cofilin, which subsequently binds to actin filaments and stimulates their disassembly. Inhibitory phosphorylation of cofilin is mediated by LIMK1, which may also be dephosphorylated and inactivated by this protein. The polypeptide is Protein phosphatase Slingshot homolog 1 (Homo sapiens (Human)).